Reading from the N-terminus, the 343-residue chain is tRNA-specific 2-thiouridylase MnmA (343 aa).

ATP-binding positions include 7 to 14 (ALSGGVDS) and methionine 33. Cysteine 87 acts as the Nucleophile in catalysis. Residues cysteine 87 and cysteine 184 are joined by a disulfide bond. Glycine 111 contacts ATP. The interaction with tRNA stretch occupies residues 135–137 (KDQ). Cysteine 184 (cysteine persulfide intermediate) is an active-site residue. An interaction with tRNA region spans residues 289–290 (RY).

It belongs to the MnmA/TRMU family.

It is found in the cytoplasm. It catalyses the reaction S-sulfanyl-L-cysteinyl-[protein] + uridine(34) in tRNA + AH2 + ATP = 2-thiouridine(34) in tRNA + L-cysteinyl-[protein] + A + AMP + diphosphate + H(+). Catalyzes the 2-thiolation of uridine at the wobble position (U34) of tRNA, leading to the formation of s(2)U34. The chain is tRNA-specific 2-thiouridylase MnmA from Desulforudis audaxviator (strain MP104C).